Here is a 272-residue protein sequence, read N- to C-terminus: Glutamate racemase (272 aa).

Residues 9–10 (DS) and 41–42 (YG) each bind substrate. The Proton donor/acceptor role is filled by C73. 74-75 (NT) is a binding site for substrate. Catalysis depends on C183, which acts as the Proton donor/acceptor. Residue 184 to 185 (TH) participates in substrate binding.

The protein belongs to the aspartate/glutamate racemases family.

It carries out the reaction L-glutamate = D-glutamate. The protein operates within cell wall biogenesis; peptidoglycan biosynthesis. Its function is as follows. Provides the (R)-glutamate required for cell wall biosynthesis. In Shewanella sp. (strain MR-4), this protein is Glutamate racemase.